Reading from the N-terminus, the 122-residue chain is Cytochrome c-556 (122 aa).

Heme contacts are provided by methionine 11, cysteine 111, cysteine 114, and histidine 115. Methionine 11, cysteine 111, cysteine 114, and histidine 115 together coordinate heme c.

Monomer. Binds 1 heme c group covalently per subunit.

Its function is as follows. Low-spin monoheme cytochrome c. This is Cytochrome c-556 from Agrobacterium tumefaciens (strain II Chrys).